Reading from the N-terminus, the 361-residue chain is Oxidoreductase lepF (361 aa).

A helical transmembrane segment spans residues 257 to 277 (MLMLVLQAVLLPVFYVVAMPL).

It belongs to the NmrA-type oxidoreductase family.

The protein resides in the membrane. Functionally, oxidoreductase; part of the gene cluster 23 that mediates the biosynthesis of a family of 2-pyridones known as leporins. The hybrid PKS-NRPS synthetase lepA and the enoyl reductase lepG are responsible for fusion of phenylalanine with a hexaketide and subsequent release of the stable tetramic acid precursor, pre-leporin C. Because lepA lacks a designated enoylreductase (ER) domain, the required activity is provided the enoyl reductase lepG. It is possible that the dehydrogenase lepF also participates in production of pre-leporin C. Cytochrome P450 monooxygenase lepH is then required for the ring expansion step to yield leporin C. Leporin C is then presumably further oxidized by the N-hydroxylase lepD to form leporin B. LepI may possess a function in biosynthesis upstream of lepA. Leporin B is further oxidized in the presence of ferric ion to give the leporin B trimer-iron chelate, but whether or not this reaction is catalyzed by an enzyme in the pathway or by ferric ion is not determined yet. In Aspergillus flavus (strain ATCC 200026 / FGSC A1120 / IAM 13836 / NRRL 3357 / JCM 12722 / SRRC 167), this protein is Oxidoreductase lepF.